Consider the following 238-residue polypeptide: MKMKITKGGTNVSYRIDNTFLQIKNYNSFNHQINYELLKDFDFVPKLISNDQKEIVWEYVEGNEPVVDLNNIKAITNQIKQLHNSNLNFPKNNLKQRVQYYRQKMVELNSGIEIIDKYANLIDDILDKMDHSTPLHNDLFPFNMIETKNKIYFVDWEYATMGDKHFELAYLIETSNMNSECEKVFLDLYSDYDSYKLLLNKIFVNYIVILWIRTQTSAPYNTTFFEQKIINYVTKLTN.

Belongs to the peptidase S49 family.

This is Protein LicA homolog (licA) from Mycoplasma capricolum subsp. capricolum (strain California kid / ATCC 27343 / NCTC 10154).